Consider the following 134-residue polypeptide: Aspartate 1-decarboxylase (134 aa).

The Schiff-base intermediate with substrate; via pyruvic acid role is filled by S25. S25 is modified (pyruvic acid (Ser)). T57 lines the substrate pocket. Y58 functions as the Proton donor in the catalytic mechanism. Residue 73-75 (GAA) coordinates substrate.

The protein belongs to the PanD family. In terms of assembly, heterooctamer of four alpha and four beta subunits. Pyruvate is required as a cofactor. Is synthesized initially as an inactive proenzyme, which is activated by self-cleavage at a specific serine bond to produce a beta-subunit with a hydroxyl group at its C-terminus and an alpha-subunit with a pyruvoyl group at its N-terminus.

The protein localises to the cytoplasm. The enzyme catalyses L-aspartate + H(+) = beta-alanine + CO2. It participates in cofactor biosynthesis; (R)-pantothenate biosynthesis; beta-alanine from L-aspartate: step 1/1. Catalyzes the pyruvoyl-dependent decarboxylation of aspartate to produce beta-alanine. The protein is Aspartate 1-decarboxylase of Sulfurihydrogenibium sp. (strain YO3AOP1).